The following is a 739-amino-acid chain: Phosphoribosylformylglycinamidine synthase subunit PurL (739 aa).

Residue His-52 is part of the active site. Residues Tyr-55 and Lys-94 each coordinate ATP. Glu-96 provides a ligand contact to Mg(2+). Substrate is bound by residues 97 to 100 (SHNH) and Arg-119. His-98 serves as the catalytic Proton acceptor. Asp-120 contributes to the Mg(2+) binding site. Residue Gln-243 participates in substrate binding. Asp-273 is a binding site for Mg(2+). 317 to 319 (ESQ) is a substrate binding site. Positions 500 and 537 each coordinate ATP. Residue Asn-538 participates in Mg(2+) binding. Ser-540 contacts substrate.

Belongs to the FGAMS family. As to quaternary structure, monomer. Part of the FGAM synthase complex composed of 1 PurL, 1 PurQ and 2 PurS subunits.

It localises to the cytoplasm. It catalyses the reaction N(2)-formyl-N(1)-(5-phospho-beta-D-ribosyl)glycinamide + L-glutamine + ATP + H2O = 2-formamido-N(1)-(5-O-phospho-beta-D-ribosyl)acetamidine + L-glutamate + ADP + phosphate + H(+). The protein operates within purine metabolism; IMP biosynthesis via de novo pathway; 5-amino-1-(5-phospho-D-ribosyl)imidazole from N(2)-formyl-N(1)-(5-phospho-D-ribosyl)glycinamide: step 1/2. In terms of biological role, part of the phosphoribosylformylglycinamidine synthase complex involved in the purines biosynthetic pathway. Catalyzes the ATP-dependent conversion of formylglycinamide ribonucleotide (FGAR) and glutamine to yield formylglycinamidine ribonucleotide (FGAM) and glutamate. The FGAM synthase complex is composed of three subunits. PurQ produces an ammonia molecule by converting glutamine to glutamate. PurL transfers the ammonia molecule to FGAR to form FGAM in an ATP-dependent manner. PurS interacts with PurQ and PurL and is thought to assist in the transfer of the ammonia molecule from PurQ to PurL. The protein is Phosphoribosylformylglycinamidine synthase subunit PurL of Enterococcus faecalis (strain ATCC 700802 / V583).